Consider the following 617-residue polypeptide: Proline--tRNA ligase (617 aa).

The protein belongs to the class-II aminoacyl-tRNA synthetase family. ProS type 1 subfamily. As to quaternary structure, homodimer.

The protein resides in the cytoplasm. The enzyme catalyses tRNA(Pro) + L-proline + ATP = L-prolyl-tRNA(Pro) + AMP + diphosphate. Its function is as follows. Catalyzes the attachment of proline to tRNA(Pro) in a two-step reaction: proline is first activated by ATP to form Pro-AMP and then transferred to the acceptor end of tRNA(Pro). As ProRS can inadvertently accommodate and process non-cognate amino acids such as alanine and cysteine, to avoid such errors it has two additional distinct editing activities against alanine. One activity is designated as 'pretransfer' editing and involves the tRNA(Pro)-independent hydrolysis of activated Ala-AMP. The other activity is designated 'posttransfer' editing and involves deacylation of mischarged Ala-tRNA(Pro). The misacylated Cys-tRNA(Pro) is not edited by ProRS. In Streptococcus pneumoniae (strain ATCC BAA-255 / R6), this protein is Proline--tRNA ligase.